Reading from the N-terminus, the 2582-residue chain is Chromodomain-helicase-DNA-binding protein 8 (2582 aa).

Disordered regions lie at residues 22–111 (DDSF…PVLQ), 136–155 (MGVS…PSQS), 253–283 (VKGS…TQGE), and 349–377 (QKIQ…PLTL). Polar residues-rich tracts occupy residues 42 to 51 (SLDSLDQMNQ), 94 to 111 (DYTT…PVLQ), and 141 to 155 (TGVS…PSQS). Residues 255 to 267 (GSAPAGNPGAAGP) show a composition bias toward low complexity. A compositionally biased stretch (pro residues) spans 355–372 (PQPPSSQPQPQPQPPPSA). Position 434 is a phosphoserine (Ser-434). Disordered stretches follow at residues 475–585 (RARG…VKRK) and 598–617 (DEEE…PILP). A compositionally biased stretch (basic and acidic residues) spans 495–518 (RPEEEGEKKRRKKSSGERLKEEKP). Phosphoserine occurs at positions 555 and 564. A compositionally biased stretch (basic residues) spans 574 to 585 (QKRRSNRQVKRK). Residue Lys-611 forms a Glycyl lysine isopeptide (Lys-Gly) (interchain with G-Cter in SUMO) linkage. 2 consecutive Chromo domains span residues 644 to 711 (AIVD…AQMR) and 726 to 792 (VEVD…RVNR). Positions 825–999 (LFNWYNRQNC…FSLLHFLEPS (175 aa)) constitute a Helicase ATP-binding domain. 838 to 845 (DEMGLGKT) is an ATP binding site. The DEAH box signature appears at 950–953 (DEAH). The Helicase C-terminal domain maps to 1139–1290 (LIDKLLPKLK…KAVLQSMSGR (152 aa)). Residues Ser-1422 and Ser-1426 each carry the phosphoserine modification. Positions 1694–1715 (EDPEYKPLQGPPKDPDDEGDPL) are disordered. The interaction with FAM124B stretch occupies residues 1791–2304 (IARREKQQRW…LVELEVECME (514 aa)). A phosphoserine mark is found at Ser-1978 and Ser-1980. Residues 1990-2019 (QCTSRTASPSPLRPDAPVEKSPEESTVQVP) form a disordered region. The residue at position 1995 (Thr-1995) is a Phosphothreonine. Phosphoserine is present on residues Ser-1997, Ser-1999, and Ser-2010. Residue Lys-2027 forms a Glycyl lysine isopeptide (Lys-Gly) (interchain with G-Cter in SUMO2) linkage. Phosphoserine is present on residues Ser-2040, Ser-2070, and Ser-2072. Positions 2045–2120 (VRVGSSDTAP…RSRPKLYDEE (76 aa)) are disordered. Residues 2065-2074 (EDEDDSDSEL) are compositionally biased toward acidic residues. Over residues 2077 to 2096 (SKLSPSSSSSSSSSSSSSST) the composition is skewed to low complexity. A compositionally biased stretch (basic and acidic residues) spans 2104-2118 (EEKLTADRSRPKLYD). A phosphoserine mark is found at Ser-2184, Ser-2202, and Ser-2204. The tract at residues 2187–2233 (VTAGGILGPGNHLLDSPSLTPGEDGDSPVPTPRSGSAASMAEEEASA) is disordered. Thr-2206 is modified (phosphothreonine). Residue Ser-2213 is modified to Phosphoserine. A Phosphothreonine modification is found at Thr-2217. Low complexity predominate over residues 2222-2233 (SAASMAEEEASA). Ser-2225 bears the Phosphoserine mark. A Glycyl lysine isopeptide (Lys-Gly) (interchain with G-Cter in SUMO2) cross-link involves residue Lys-2258. The interval 2486–2582 (HVDSSTMLHH…NSDSSEDADD (97 aa)) is disordered. Positions 2493 to 2511 (LHHHHHHPHPHHHHHHHPG) are enriched in basic residues. Residues 2514-2529 (TTGYPSSPATTTSGTA) are compositionally biased toward low complexity. Ser-2520 is modified (phosphoserine). The span at 2537–2551 (PEDDDEEEDEEDDDL) shows a compositional bias: acidic residues.

This sequence belongs to the SNF2/RAD54 helicase family. CHD8 subfamily. In terms of assembly, interacts with CTNNB1 and PIAS3. Component of some MLL1/MLL complex, at least composed of the core components KMT2A/MLL1, ASH2L, HCFC1/HCF1, WDR5 and RBBP5, as well as the facultative components BACC1, CHD8, E2F6, HSP70, INO80C, KANSL1, LAS1L, MAX, MCRS1, MGA, KAT8/MOF, PELP1, PHF20, PRP31, RING2, RUVB1/TIP49A, RUVB2/TIP49B, SENP3, TAF1, TAF4, TAF6, TAF7, TAF9 and TEX10. Interacts with CHD7. Interacts with FAM124B. Interacts with p53/TP53 and histone H1. Interacts with CTCF. Interacts with TLK2. Interacts with HNRNPL in an RNA-dependent manner. In terms of processing, sumoylated.

The protein resides in the nucleus. It catalyses the reaction ATP + H2O = ADP + phosphate + H(+). In terms of biological role, ATP-dependent chromatin-remodeling factor, it slides nucleosomes along DNA; nucleosome sliding requires ATP. Acts as a transcription repressor by remodeling chromatin structure and recruiting histone H1 to target genes. Suppresses p53/TP53-mediated apoptosis by recruiting histone H1 and preventing p53/TP53 transactivation activity. Acts as a negative regulator of Wnt signaling pathway by regulating beta-catenin (CTNNB1) activity. Negatively regulates CTNNB1-targeted gene expression by being recruited specifically to the promoter regions of several CTNNB1 responsive genes. Involved in both enhancer blocking and epigenetic remodeling at chromatin boundary via its interaction with CTCF. Acts as a suppressor of STAT3 activity by suppressing the LIF-induced STAT3 transcriptional activity. Also acts as a transcription activator via its interaction with ZNF143 by participating in efficient U6 RNA polymerase III transcription. Regulates alternative splicing of a core group of genes involved in neuronal differentiation, cell cycle and DNA repair. Enables H3K36me3-coupled transcription elongation and co-transcriptional RNA processing likely via interaction with HNRNPL. The protein is Chromodomain-helicase-DNA-binding protein 8 of Mus musculus (Mouse).